A 196-amino-acid polypeptide reads, in one-letter code: Probable histone chaperone ASF1A (196 aa).

Positions 146–157 are enriched in basic and acidic residues; the sequence is VTKFPIDFHPEE. Residues 146-196 form a disordered region; it reads VTKFPIDFHPEEEQTAATAAPPEQSDEQQPNVNGEAQVLPDQSVEPKPEES.

It belongs to the ASF1 family. Interacts with histone H3 and histone H4. Component of the HIRA complex made of UBN1, UBN2, ASF1A, CABIN1 and HIRA. Interacts with HIRA. In terms of tissue distribution, expressed in leaves and flower buds.

It is found in the nucleus. The protein resides in the nucleolus. Histone chaperone that facilitates histone deposition and histone exchange and removal during nucleosome assembly and disassembly. While encoded by a region of the Arabidopsis thaliana genome that is homologous to the Brassica S-locus for self incompatibility, this protein may not play the same role in Arabidopsis thaliana. The protein is Probable histone chaperone ASF1A (ASF1A) of Arabidopsis thaliana (Mouse-ear cress).